A 290-amino-acid polypeptide reads, in one-letter code: Probable 2-(5''-triphosphoribosyl)-3'-dephosphocoenzyme-A synthase (290 aa).

The protein belongs to the CitG/MdcB family.

The catalysed reaction is 3'-dephospho-CoA + ATP = 2'-(5''-triphospho-alpha-D-ribosyl)-3'-dephospho-CoA + adenine. Involved in the formation of 2-(5''-phosphoribosyl)-3'-dephosphocoenzyme-A, the prosthetic group of the acyl-carrier protein of the malonate decarboxylase. This is Probable 2-(5''-triphosphoribosyl)-3'-dephosphocoenzyme-A synthase from Stutzerimonas stutzeri (strain A1501) (Pseudomonas stutzeri).